A 451-amino-acid chain; its full sequence is UDP-N-acetylmuramoylalanine--D-glutamate ligase (451 aa).

119-125 serves as a coordination point for ATP; sequence GSNGKTT.

The protein belongs to the MurCDEF family.

It is found in the cytoplasm. The catalysed reaction is UDP-N-acetyl-alpha-D-muramoyl-L-alanine + D-glutamate + ATP = UDP-N-acetyl-alpha-D-muramoyl-L-alanyl-D-glutamate + ADP + phosphate + H(+). The protein operates within cell wall biogenesis; peptidoglycan biosynthesis. Functionally, cell wall formation. Catalyzes the addition of glutamate to the nucleotide precursor UDP-N-acetylmuramoyl-L-alanine (UMA). This Geobacillus kaustophilus (strain HTA426) protein is UDP-N-acetylmuramoylalanine--D-glutamate ligase.